We begin with the raw amino-acid sequence, 474 residues long: NAD(P) transhydrogenase subunit beta (474 aa).

9 consecutive transmembrane segments (helical) span residues 4-24 (GLVQ…LAGL), 46-66 (IATI…AMII), 83-103 (MPEL…LVGF), 132-152 (VLTN…AVTF), 181-200 (LAAL…NPES), 202-222 (FPVL…VASI), 229-249 (VVVS…GFIL), 253-273 (LLIV…YIMC), and 321-341 (VIIT…VADI).

This sequence belongs to the PNT beta subunit family. In terms of assembly, heterodimer of an alpha and a beta chain.

Its subcellular location is the cell inner membrane. It catalyses the reaction NAD(+) + NADPH + H(+)(in) = NADH + NADP(+) + H(+)(out). Its function is as follows. The transhydrogenation between NADH and NADP is coupled to respiration and ATP hydrolysis and functions as a proton pump across the membrane. This is NAD(P) transhydrogenase subunit beta (pntB) from Haemophilus influenzae (strain ATCC 51907 / DSM 11121 / KW20 / Rd).